Consider the following 96-residue polypeptide: uncharacterized protein (96 aa).

A signal peptide spans 1–30; sequence MLILSVFCAVFYAFLTAIVANFSLKTLAIG. Residues 31-54 are Extracellular-facing; the sequence is ATFVKSHLKSNPIPYGDLVADSLD. A helical transmembrane segment spans residues 55–75; sequence FGNITPTVTLLFAILIAVLAL. Topologically, residues 76–96 are cytoplasmic; it reads KCEFSCSTSAPAGQASGRKVK.

The protein localises to the membrane. This is an uncharacterized protein from Dictyostelium discoideum (Social amoeba).